We begin with the raw amino-acid sequence, 64 residues long: Defensin beta 4A (64 aa).

Residues 1 to 23 (MRVLYLLFSFLFIFLMPLPGVFG) form the signal peptide. Disulfide bonds link Cys31-Cys60, Cys38-Cys53, and Cys43-Cys61. A phosphatidylinositol 4,5-bisphosphate (PIP2) binding region spans residues 33–48 (KNGAICHPVFCPRRYK).

The protein belongs to the beta-defensin family. LAP/TAP subfamily. Monomer. Homodimer.

It localises to the secreted. In terms of biological role, exhibits antimicrobial activity against Gram-negative bacteria and Gram-positive bacteria, with highest activity against Gram-negative bacteria. Antimicrobial activity against P.aruginosa seems to be salt-sensitive and is reduced with high salt concentrations greater than 25 mM. Also exhibits antimicrobial activity against the yeast C.albicans. Permeabilizes C.albicans cell membranes via targeting plasma membrane lipid phosphatidylinositol 4,5-bisphosphate (PIP2), thereby leading to cell fragmentation and cell death. Acts as a ligand for C-C chemokine receptor CCR6. Binds to CCR6 and induces chemotactic activity of CCR6-expressing cells, such as immature dendritic cells and memory T cells. In Macaca mulatta (Rhesus macaque), this protein is Defensin beta 4A (DEFB4A).